The following is a 1234-amino-acid chain: DNA-directed RNA polymerase I subunit RPA2 (1234 aa).

The C4-type zinc finger occupies 1119–1150; sequence CRQCGSFLSTQPTVSPFIGKRKAVSTVRCRNC.

This sequence belongs to the RNA polymerase beta chain family. In terms of assembly, component of the RNA polymerase I (Pol I) complex consisting of 14 subunits.

The protein localises to the nucleus. Its subcellular location is the nucleolus. The catalysed reaction is RNA(n) + a ribonucleoside 5'-triphosphate = RNA(n+1) + diphosphate. In terms of biological role, DNA-dependent RNA polymerase catalyzes the transcription of DNA into RNA using the four ribonucleoside triphosphates as substrates. Second largest core component of RNA polymerase I which synthesizes ribosomal RNA precursors. Proposed to contribute to the polymerase catalytic activity and forms the polymerase active center together with the largest subunit. Pol I is composed of mobile elements and RPA2 is part of the core element with the central large cleft and probably a clamp element that moves to open and close the cleft. In Neurospora crassa (strain ATCC 24698 / 74-OR23-1A / CBS 708.71 / DSM 1257 / FGSC 987), this protein is DNA-directed RNA polymerase I subunit RPA2 (acr-2).